Consider the following 541-residue polypeptide: Chaperonin GroEL (541 aa).

Residues 29 to 32, 86 to 90, G413, 476 to 478, and D492 contribute to the ATP site; these read TLGP, DGTTT, and NAA.

The protein belongs to the chaperonin (HSP60) family. As to quaternary structure, forms a cylinder of 14 subunits composed of two heptameric rings stacked back-to-back. Interacts with the co-chaperonin GroES.

Its subcellular location is the cytoplasm. The enzyme catalyses ATP + H2O + a folded polypeptide = ADP + phosphate + an unfolded polypeptide.. Functionally, together with its co-chaperonin GroES, plays an essential role in assisting protein folding. The GroEL-GroES system forms a nano-cage that allows encapsulation of the non-native substrate proteins and provides a physical environment optimized to promote and accelerate protein folding. The protein is Chaperonin GroEL of Rhodococcus hoagii (Corynebacterium equii).